A 175-amino-acid polypeptide reads, in one-letter code: Ribosome maturation factor RimM (175 aa).

The 74-residue stretch at 100 to 173 (EGEYYFHEII…IIIIRPMEGL (74 aa)) folds into the PRC barrel domain.

This sequence belongs to the RimM family. Binds ribosomal protein uS19.

The protein resides in the cytoplasm. An accessory protein needed during the final step in the assembly of 30S ribosomal subunit, possibly for assembly of the head region. Essential for efficient processing of 16S rRNA. May be needed both before and after RbfA during the maturation of 16S rRNA. It has affinity for free ribosomal 30S subunits but not for 70S ribosomes. This Geobacillus thermodenitrificans (strain NG80-2) protein is Ribosome maturation factor RimM.